A 438-amino-acid polypeptide reads, in one-letter code: Na(+)/H(+) antiporter NhaA (438 aa).

11 helical membrane passes run 23-43 (FGGI…NSFL), 62-82 (FFIG…LFFL), 104-124 (SFPV…YFFL), 133-153 (GFGI…MLLG), 162-182 (VFLI…IALF), 185-205 (TNLK…LAVL), 212-232 (SLIP…QSGI), 302-322 (FLAP…NAGV), 337-357 (LGVI…ITFI), 372-392 (WWHI…SMFI), and 410-430 (IAIL…LFVL).

It belongs to the NhaA Na(+)/H(+) (TC 2.A.33) antiporter family.

The protein localises to the cell inner membrane. The enzyme catalyses Na(+)(in) + 2 H(+)(out) = Na(+)(out) + 2 H(+)(in). In terms of biological role, na(+)/H(+) antiporter that extrudes sodium in exchange for external protons. This chain is Na(+)/H(+) antiporter NhaA, found in Helicobacter pylori (strain G27).